A 125-amino-acid chain; its full sequence is Small ribosomal subunit protein uS13 (125 aa).

The segment at 92–125 (RHRRGLPVRGQRTRTNARTRKGKKKTVGAQAKKK) is disordered.

The protein belongs to the universal ribosomal protein uS13 family. Part of the 30S ribosomal subunit. Forms a loose heterodimer with protein S19. Forms two bridges to the 50S subunit in the 70S ribosome.

Functionally, located at the top of the head of the 30S subunit, it contacts several helices of the 16S rRNA. In the 70S ribosome it contacts the 23S rRNA (bridge B1a) and protein L5 of the 50S subunit (bridge B1b), connecting the 2 subunits; these bridges are implicated in subunit movement. Contacts the tRNAs in the A and P-sites. This is Small ribosomal subunit protein uS13 from Akkermansia muciniphila (strain ATCC BAA-835 / DSM 22959 / JCM 33894 / BCRC 81048 / CCUG 64013 / CIP 107961 / Muc).